Here is a 664-residue protein sequence, read N- to C-terminus: Cyclic nucleotide-gated channel alpha-2 (664 aa).

A compositionally biased stretch (polar residues) spans Met-1–Val-20. The disordered stretch occupies residues Met-1–Glu-49. At Met-1–Leu-144 the chain is on the cytoplasmic side. Residues Phe-145–Asp-166 form a helical membrane-spanning segment. At Leu-167 to Leu-176 the chain is on the extracellular side. The chain crosses the membrane as a helical span at residues Val-177–Gly-197. Topologically, residues Phe-198–Lys-222 are cytoplasmic. A helical membrane pass occupies residues Leu-223–His-241. The Extracellular segment spans residues Asn-242–Arg-246. The helical transmembrane segment at Phe-247–Thr-265 threads the bilayer. The Cytoplasmic portion of the chain corresponds to Arg-266 to Ile-272. Residues Pro-270 to Met-378 are ion conduction pathway. Residues Phe-273 to Ile-296 form a helical membrane-spanning segment. At Ser-297–Tyr-319 the chain is on the extracellular side. 2 helical membrane-spanning segments follow: residues Leu-320–Ile-354 and Phe-355–Asn-379. The tract at residues Thr-337–Glu-340 is selectivity filter. Residues Ala-380–Gln-456 are C-linker. Residues Ala-380–Pro-664 are Cytoplasmic-facing. The cyclic nucleotide-binding domain stretch occupies residues Ala-460–Lys-580. Residues Gly-520, Ser-523, Arg-536, and Thr-537 each coordinate 3',5'-cyclic GMP. Positions 536 and 537 each coordinate 3',5'-cyclic AMP. Residues Val-597–Asp-651 are a coiled coil. The segment at Thr-644–Pro-664 is disordered.

It belongs to the cyclic nucleotide-gated cation channel (TC 1.A.1.5) family. CNGA2 subfamily. In terms of assembly, the olfactory cyclic nucleotide-gated channel is an heterotetramer composed of CNGA2, CNGA4 and CNGB1b subunits with 2:1:1 stoichiometry.

The protein localises to the cell projection. It localises to the cilium membrane. It carries out the reaction Ca(2+)(in) = Ca(2+)(out). The enzyme catalyses Na(+)(in) = Na(+)(out). The catalysed reaction is K(+)(in) = K(+)(out). It catalyses the reaction NH4(+)(in) = NH4(+)(out). It carries out the reaction Rb(+)(in) = Rb(+)(out). The enzyme catalyses Li(+)(in) = Li(+)(out). The catalysed reaction is Cs(+)(in) = Cs(+)(out). Its function is as follows. Pore-forming subunit of the olfactory cyclic nucleotide-gated channel. Operates in the cilia of olfactory sensory neurons where chemical stimulation of the odorant is converted to an electrical signal. Mediates odorant-induced cAMP-dependent Ca(2+) influx triggering neuron depolarization. The rise of intracellular Ca(2+) levels potentiates the olfactory response by activating Ca(2+)-dependent Cl(-) channels, but it also serves as a negative feedback signal to desensitize the channel for rapid adaptation to odorants. Conducts cAMP- and cGMP-gated ion currents, with permeability for monovalent and divalent cations. This is Cyclic nucleotide-gated channel alpha-2 from Oryctolagus cuniculus (Rabbit).